A 241-amino-acid chain; its full sequence is MATNAKPVYKRILLKLSGEALQGSEGFGIDASILDRMAQEIKELVELGIQVGVVIGGGNLFRGAGLAKAGMNRVVGDHMGMLATVMNGLAMRDALHRAYVNARLMSAIPLNGVCDNYSWAEAISLLRNNRVVILSAGTGNPFFTTDSAACLRGIEIEADVVLKATKVDGVFTADPAKDPSATMYDQLTYSEVLEKELKVMDLAAFTLARDHKLPIRVFNMNKPGALRRVVMGEKEGTLITE.

An ATP-binding site is contributed by 15 to 18 (KLSG). Residues 23–28 (GSEGFG) are involved in allosteric activation by GTP. Gly57 lines the UMP pocket. ATP-binding residues include Gly58 and Arg62. Residues Asp77 and 138–145 (TGNPFFTT) contribute to the UMP site. Thr165, Phe171, and Asp174 together coordinate ATP.

Belongs to the UMP kinase family. As to quaternary structure, homohexamer.

It is found in the cytoplasm. It catalyses the reaction UMP + ATP = UDP + ADP. It participates in pyrimidine metabolism; CTP biosynthesis via de novo pathway; UDP from UMP (UMPK route): step 1/1. Its activity is regulated as follows. Allosterically activated by GTP. Inhibited by UTP. Its function is as follows. Catalyzes the reversible phosphorylation of UMP to UDP. The polypeptide is Uridylate kinase (Klebsiella pneumoniae subsp. pneumoniae (strain ATCC 700721 / MGH 78578)).